Reading from the N-terminus, the 493-residue chain is Cysteine--tRNA ligase (493 aa).

Residue cysteine 29 coordinates Zn(2+). Positions 31–41 (ATVQSEPHIGH) match the 'HIGH' region motif. Positions 214, 239, and 243 each coordinate Zn(2+). The short motif at 270–274 (KMSKS) is the 'KMSKS' region element. Position 273 (lysine 273) interacts with ATP.

This sequence belongs to the class-I aminoacyl-tRNA synthetase family. Monomer. The cofactor is Zn(2+).

It is found in the cytoplasm. It carries out the reaction tRNA(Cys) + L-cysteine + ATP = L-cysteinyl-tRNA(Cys) + AMP + diphosphate. This chain is Cysteine--tRNA ligase, found in Renibacterium salmoninarum (strain ATCC 33209 / DSM 20767 / JCM 11484 / NBRC 15589 / NCIMB 2235).